Consider the following 127-residue polypeptide: DNA-directed RNA polymerase subunit omega (127 aa).

The protein belongs to the RNA polymerase subunit omega family. In terms of assembly, the RNAP catalytic core consists of 2 alpha, 1 beta, 1 beta' and 1 omega subunit. When a sigma factor is associated with the core the holoenzyme is formed, which can initiate transcription.

It carries out the reaction RNA(n) + a ribonucleoside 5'-triphosphate = RNA(n+1) + diphosphate. In terms of biological role, promotes RNA polymerase assembly. Latches the N- and C-terminal regions of the beta' subunit thereby facilitating its interaction with the beta and alpha subunits. The protein is DNA-directed RNA polymerase subunit omega (rpoZ) of Rickettsia prowazekii (strain Madrid E).